The chain runs to 157 residues: RNA pyrophosphohydrolase (157 aa).

The region spanning 6–149 is the Nudix hydrolase domain; the sequence is SYRPNVAAVI…KRKVYRRVID (144 aa). Residues 43-64 carry the Nudix box motif; that stretch reads GGIDEGETPEDALYRELLEEIG.

It belongs to the Nudix hydrolase family. RppH subfamily. Requires a divalent metal cation as cofactor.

Functionally, accelerates the degradation of transcripts by removing pyrophosphate from the 5'-end of triphosphorylated RNA, leading to a more labile monophosphorylated state that can stimulate subsequent ribonuclease cleavage. In Sulfurovum sp. (strain NBC37-1), this protein is RNA pyrophosphohydrolase.